A 189-amino-acid chain; its full sequence is HGPRTase-like protein 2 (189 aa).

It belongs to the purine/pyrimidine phosphoribosyltransferase family. Archaeal HPRT subfamily.

Functionally, may catalyze a purine salvage reaction, the substrate is unknown. This chain is HGPRTase-like protein 2, found in Haloarcula marismortui (strain ATCC 43049 / DSM 3752 / JCM 8966 / VKM B-1809) (Halobacterium marismortui).